Consider the following 281-residue polypeptide: NADPH-dependent 7-cyano-7-deazaguanine reductase (281 aa).

88 to 90 is a binding site for substrate; sequence IES. 90 to 91 contributes to the NADPH binding site; it reads SK. The Thioimide intermediate role is filled by C189. The Proton donor role is filled by D196. 228-229 contributes to the substrate binding site; that stretch reads HE. 257-258 provides a ligand contact to NADPH; sequence RG.

This sequence belongs to the GTP cyclohydrolase I family. QueF type 2 subfamily. As to quaternary structure, homodimer.

It is found in the cytoplasm. The catalysed reaction is 7-aminomethyl-7-carbaguanine + 2 NADP(+) = 7-cyano-7-deazaguanine + 2 NADPH + 3 H(+). It participates in tRNA modification; tRNA-queuosine biosynthesis. Catalyzes the NADPH-dependent reduction of 7-cyano-7-deazaguanine (preQ0) to 7-aminomethyl-7-deazaguanine (preQ1). The chain is NADPH-dependent 7-cyano-7-deazaguanine reductase from Proteus mirabilis (strain HI4320).